Here is a 262-residue protein sequence, read N- to C-terminus: Apolipoprotein A-I (262 aa).

The N-terminal stretch at 1 to 18 is a signal peptide; that stretch reads MKAVVLTLAVLFLTGSQA. Repeat copies occupy residues 67-88 and 89-110. The interval 67 to 262 is 10 X approximate tandem repeats; it reads LKLLDNWDTL…DEASKKLNAQ (196 aa). Methionine sulfoxide is present on Met-109. Residues 111-121 form a 3; half-length repeat; the sequence is KDLEEVKQKVQ. Repeat copies occupy residues 122 to 142, 144 to 165, 166 to 184, 185 to 206, and 207 to 227. Residues 228–238 form a 9; half-length repeat; it reads PALEDLRQGLM. Position 238 is a methionine sulfoxide (Met-238). The stretch at 239–262 is repeat 10; sequence PVLESLKVSILAAIDEASKKLNAQ.

This sequence belongs to the apolipoprotein A1/A4/E family. Homodimer. Interacts with APOA1BP and CLU. Component of a sperm activating protein complex (SPAP), consisting of APOA1, an immunoglobulin heavy chain, an immunoglobulin light chain and albumin. Interacts with NDRG1. Interacts with SCGB3A2. Interacts with NAXE and YJEFN3. In terms of processing, glycosylated. Post-translationally, palmitoylated. Phosphorylation sites are present in the extracellular medium. In terms of tissue distribution, major protein of plasma HDL, also found in chylomicrons.

The protein localises to the secreted. Participates in the reverse transport of cholesterol from tissues to the liver for excretion by promoting cholesterol efflux from tissues and by acting as a cofactor for the lecithin cholesterol acyltransferase (LCAT). As part of the SPAP complex, activates spermatozoa motility. The polypeptide is Apolipoprotein A-I (APOA1) (Pantholops hodgsonii (Chiru)).